Reading from the N-terminus, the 741-residue chain is Moderate conductance mechanosensitive channel YbiO (741 aa).

A signal peptide spans Met1–Ala18. Residues Pro22–Ile42 form a disordered region. The segment covering Thr25–Thr34 has biased composition (low complexity). 11 helical membrane passes run Met143–Tyr163, Ala185–Gly205, Leu225–Cys245, Leu268–Asn288, Ile294–Ile314, Phe343–Leu363, Phe372–Gly392, Ile432–Trp452, Ile466–Ser486, Leu509–Val529, and Ile533–Phe553.

Belongs to the MscS (TC 1.A.23) family. In terms of assembly, homoheptamer.

It is found in the cell inner membrane. Functionally, mechanosensitive channel that protects cells against hypoosmotic stress when highly overexpressed. In Escherichia coli (strain K12), this protein is Moderate conductance mechanosensitive channel YbiO (ybiO).